Reading from the N-terminus, the 107-residue chain is Nucleoid-associated protein RBE_0048 (107 aa).

It belongs to the YbaB/EbfC family. As to quaternary structure, homodimer.

It localises to the cytoplasm. The protein resides in the nucleoid. Functionally, binds to DNA and alters its conformation. May be involved in regulation of gene expression, nucleoid organization and DNA protection. The chain is Nucleoid-associated protein RBE_0048 from Rickettsia bellii (strain RML369-C).